A 389-amino-acid chain; its full sequence is Nicotinate phosphoribosyltransferase (389 aa).

Position 216 is a phosphohistidine; by autocatalysis (His216).

It belongs to the NAPRTase family. Transiently phosphorylated on a His residue during the reaction cycle. Phosphorylation strongly increases the affinity for substrates and increases the rate of nicotinate D-ribonucleotide production. Dephosphorylation regenerates the low-affinity form of the enzyme, leading to product release.

The catalysed reaction is nicotinate + 5-phospho-alpha-D-ribose 1-diphosphate + ATP + H2O = nicotinate beta-D-ribonucleotide + ADP + phosphate + diphosphate. It participates in cofactor biosynthesis; NAD(+) biosynthesis; nicotinate D-ribonucleotide from nicotinate: step 1/1. In terms of biological role, catalyzes the synthesis of beta-nicotinate D-ribonucleotide from nicotinate and 5-phospho-D-ribose 1-phosphate at the expense of ATP. In Ralstonia pickettii (strain 12J), this protein is Nicotinate phosphoribosyltransferase.